Here is an 885-residue protein sequence, read N- to C-terminus: Leucine--tRNA ligase (885 aa).

A 'HIGH' region motif is present at residues 48 to 58; it reads PYPSGKLHMGH. The 'KMSKS' region signature appears at 639–643; the sequence is TMSKS. Lysine 642 lines the ATP pocket.

It belongs to the class-I aminoacyl-tRNA synthetase family.

It is found in the cytoplasm. The catalysed reaction is tRNA(Leu) + L-leucine + ATP = L-leucyl-tRNA(Leu) + AMP + diphosphate. This chain is Leucine--tRNA ligase, found in Bordetella bronchiseptica (strain ATCC BAA-588 / NCTC 13252 / RB50) (Alcaligenes bronchisepticus).